A 398-amino-acid polypeptide reads, in one-letter code: Nonsense-mediated decay protein 4 (398 aa).

A disordered region spans residues 327–355; the sequence is PVTSNYRGKNNRGRNNRGRRGNKRRERER. A compositionally biased stretch (basic residues) spans 335 to 350; the sequence is KNNRGRNNRGRRGNKR.

It is found in the cytoplasm. In terms of biological role, involved in nonsense-mediated decay of mRNAs containing premature stop codons. In Candida albicans (strain SC5314 / ATCC MYA-2876) (Yeast), this protein is Nonsense-mediated decay protein 4 (NMD4).